The chain runs to 878 residues: MLLGASWLCASKAAATAARGEGEDRQGEQQRGAQARTEEDMDESSLLDLLECSVCLERLDTTAKVLPCQHTFCRRCLESIVCSRHELRCPECRILVGCGVDELPANILLVRLLDGIRQRPRTGASPGSSPPARPGPGTFSALAGGAGGATGSPPCSPVFLSAAAGSSTSSLCDVATNRSVPVAKTLSQLPYAKALYSYEGKEPGDLKFNKGDIIILRRKVDENWYHGELQGMHGFLPASYIQCVRPLPQALPQGKALYDFEMKDRDQDKDCLTFTKDEVLTVIRRVDDNWAEGMLGDKIGIFPLLYVELNDSAKQLIEMDKLCPAATTAYNYDALLSSDPSTVASVAPGPTLSSSGAVSAFQRRVDSKKNAKKRHSFTALSVTHKSSQAASHRHSMEISAPVLISSSDPRAAARIGELAHLSCTVPTQDSSSAGPVPTALPRAAAVAGEQGMSPKVQLPLNVYLALYAYKPQKNDELELRKGEMYRVLEKCQDGWFKGASLKTGVSGVFPGNYVTPVSRVPGGGAGLPWNNVLGGSPLAKGMATIMHPGGGSLSSPATAARSALPLTTLQDHMQHPATSLPTGSCLRHSAQPTASQAGDTTIPTATHASAQALDRPTATVSPLRTQTSPSRLPSTGLRPRSVASPQHGQQSPAQMCPRPAIPFTSAASAITPPNVSAANLSGEVGGTPISGLSTPSLINTGFKPDDKKNEKKEKKSGLLKLLAGASTKKKSRSPPSVSPTHDPQSAMDTSLQGAMGPEVSPLTVHGRAGSCPIESEMQGAIGLEPLHRKAGSLDLNFSLSPSRQATLSMASIRPEPKPLPRERYRVVVSYPPQSEAEIELKEGDIVFVHKKHEDGWFKGTLQRNGRTGLFPGSFVESF.

Residues 19-40 (RGEGEDRQGEQQRGAQARTEED) are disordered. The segment at 52 to 93 (CSVCLERLDTTAKVLPCQHTFCRRCLESIVCSRHELRCPECR) adopts an RING-type zinc-finger fold. Residues 120-145 (PRTGASPGSSPPARPGPGTFSALAGG) are disordered. 2 consecutive SH3 domains span residues 187–246 (SQLP…CVRP) and 249–312 (QALP…LNDS). The interaction with RAC1 stretch occupies residues 364–433 (RVDSKKNAKK…TVPTQDSSSA (70 aa)). Residue serine 395 is modified to Phosphoserine. An SH3 3 domain is found at 458–519 (LPLNVYLALY…PGNYVTPVSR (62 aa)). Disordered regions lie at residues 574–659 (QHPA…CPRP) and 688–758 (PISG…MGPE). 4 stretches are compositionally biased toward polar residues: residues 590 to 609 (AQPTASQAGDTTIPTATHAS), 618 to 633 (ATVSPLRTQTSPSRLP), 643 to 653 (ASPQHGQQSPA), and 690 to 699 (SGLSTPSLIN). A compositionally biased stretch (basic and acidic residues) spans 703 to 716 (KPDDKKNEKKEKKS). Residues 741–752 (HDPQSAMDTSLQ) are compositionally biased toward polar residues. A Phosphoserine modification is found at serine 792. The region spanning 819 to 878 (LPRERYRVVVSYPPQSEAEIELKEGDIVFVHKKHEDGWFKGTLQRNGRTGLFPGSFVESF) is the SH3 4 domain.

Belongs to the SH3RF family. In terms of assembly, interacts (via SH3 domain 3) with PAK2. Interacts with RAC1 (GTP-bound form). Post-translationally, autoubiquitinated.

It catalyses the reaction S-ubiquitinyl-[E2 ubiquitin-conjugating enzyme]-L-cysteine + [acceptor protein]-L-lysine = [E2 ubiquitin-conjugating enzyme]-L-cysteine + N(6)-ubiquitinyl-[acceptor protein]-L-lysine.. It participates in protein modification; protein ubiquitination. Functionally, has E3 ubiquitin-protein ligase activity. This Mus musculus (Mouse) protein is E3 ubiquitin-protein ligase SH3RF3 (Sh3rf3).